Reading from the N-terminus, the 294-residue chain is Ribosomal protein L11 methyltransferase (294 aa).

The S-adenosyl-L-methionine site is built by threonine 147, glycine 169, aspartate 191, and asparagine 231.

This sequence belongs to the methyltransferase superfamily. PrmA family.

The protein resides in the cytoplasm. The enzyme catalyses L-lysyl-[protein] + 3 S-adenosyl-L-methionine = N(6),N(6),N(6)-trimethyl-L-lysyl-[protein] + 3 S-adenosyl-L-homocysteine + 3 H(+). Methylates ribosomal protein L11. In Dichelobacter nodosus (strain VCS1703A), this protein is Ribosomal protein L11 methyltransferase.